The sequence spans 377 residues: Putative F-box protein At1g70380 (377 aa).

Positions 3–48 (NTSFETLALDMQIEILARLPLKYLMRCMCVSKKWASLIRGEDFRSA) constitute an F-box domain.

This is Putative F-box protein At1g70380 from Arabidopsis thaliana (Mouse-ear cress).